The sequence spans 532 residues: Glutamate--cysteine ligase (532 aa).

Belongs to the glutamate--cysteine ligase type 1 family. Type 1 subfamily.

It catalyses the reaction L-cysteine + L-glutamate + ATP = gamma-L-glutamyl-L-cysteine + ADP + phosphate + H(+). It functions in the pathway sulfur metabolism; glutathione biosynthesis; glutathione from L-cysteine and L-glutamate: step 1/2. In Pseudomonas fluorescens (strain Pf0-1), this protein is Glutamate--cysteine ligase.